The sequence spans 311 residues: ATP synthase subunit a (311 aa).

6 helical membrane-spanning segments follow: residues 62–82, 123–143, 179–199, 213–233, 253–273, and 276–296; these read AVHV…GFFM, VAPM…MDLI, VTVF…WGFI, FWYF…VALI, IFIL…LGGI, and FGWA…FMVL.

Belongs to the ATPase A chain family. In terms of assembly, F-type ATPases have 2 components, CF(1) - the catalytic core - and CF(0) - the membrane proton channel. CF(1) has five subunits: alpha(3), beta(3), gamma(1), delta(1), epsilon(1). CF(0) has three main subunits: a(1), b(2) and c(9-12). The alpha and beta chains form an alternating ring which encloses part of the gamma chain. CF(1) is attached to CF(0) by a central stalk formed by the gamma and epsilon chains, while a peripheral stalk is formed by the delta and b chains.

The protein resides in the cell inner membrane. Its function is as follows. Key component of the proton channel; it plays a direct role in the translocation of protons across the membrane. The protein is ATP synthase subunit a of Teredinibacter turnerae (strain ATCC 39867 / T7901).